The sequence spans 900 residues: Peroxisomal hydratase-dehydrogenase-epimerase (900 aa).

Short-chain dehydrogenase like stretches follow at residues 6-230 and 319-535; these read SFKD…THES and SLCN…ASEE. Positions 14, 53, 100, 133, 165, and 169 each coordinate NADP(+). The Proton donor role is filled by tyrosine 165. Lysine 169 acts as the Lowers pKa of active site Tyr in catalysis. (3R)-3-hydroxydecanoyl-CoA-binding residues include histidine 689, glycine 690, lysine 719, aspartate 803, asparagine 805, glycine 826, phenylalanine 851, and threonine 852. The region spanning 775 to 887 is the MaoC-like domain; sequence EVPHGKVPDF…DTTRNVIVLD (113 aa). The Microbody targeting signal signature appears at 898-900; that stretch reads SKL.

The protein belongs to the short-chain dehydrogenases/reductases (SDR) family. In terms of assembly, monomer.

The protein localises to the peroxisome. It carries out the reaction a (3R)-3-hydroxyacyl-CoA = a (2E)-enoyl-CoA + H2O. The enzyme catalyses a (3R)-3-hydroxyacyl-CoA + NAD(+) = a 3-oxoacyl-CoA + NADH + H(+). It participates in lipid metabolism; fatty acid beta-oxidation. Functionally, second trifunctional enzyme acting on the beta-oxidation pathway for fatty acids, possessing hydratase-dehydrogenase-epimerase activities. Converts trans-2-enoyl-CoA via D-3-hydroxyacyl-CoA to 3-ketoacyl-CoA. The polypeptide is Peroxisomal hydratase-dehydrogenase-epimerase (FOX2) (Saccharomyces cerevisiae (strain ATCC 204508 / S288c) (Baker's yeast)).